Here is a 318-residue protein sequence, read N- to C-terminus: N-succinylornithine carbamoyltransferase (318 aa).

Carbamoyl phosphate contacts are provided by residues 47 to 50, W75, and R110; that span reads SLRT. E142 contributes to the N(2)-succinyl-L-ornithine binding site. Position 147–150 (147–150) interacts with carbamoyl phosphate; sequence HPLQ. Residues H176 and K236 each contribute to the N(2)-succinyl-L-ornithine site. Carbamoyl phosphate is bound at residue 274–275; the sequence is CL. R278 is a binding site for N(2)-succinyl-L-ornithine. Position 302 (R302) interacts with carbamoyl phosphate.

This sequence belongs to the aspartate/ornithine carbamoyltransferase superfamily. SOTCase family. Homotrimer.

It carries out the reaction N(2)-succinyl-L-ornithine + carbamoyl phosphate = N(2)-succinyl-L-citrulline + phosphate + H(+). Its pathway is amino-acid biosynthesis; L-arginine biosynthesis. Its function is as follows. Catalyzes the transfer of the carbamoyl group from carbamoyl phosphate to the delta-amino group of N(2)-succinyl-L-ornithine to produce N(2)-succinyl-L-citrulline. Is essential for arginine biosynthesis. Has no activity with either L-ornithine or L-aspartate as substrate. Also has no detectable AOTCase activity, being unable to convert N(2)-acetyl-L-ornithine to N(2)-acetyl-L-citrulline. The chain is N-succinylornithine carbamoyltransferase from Bacteroides thetaiotaomicron (strain ATCC 29148 / DSM 2079 / JCM 5827 / CCUG 10774 / NCTC 10582 / VPI-5482 / E50).